The sequence spans 238 residues: MVIKAQSPAGFAEEYIIESIWNSRFPPGSILPAERELSELIGVTRTTLREVLQRLARDGWLTIQHGKPTKVNNFWETSGLSILETLARLDHDSVPQLIDNLLSVRTNISSIFIRRAIRTYPDKAREVLETANEVEDQAEAYTRLDYSIFRGLAFASGNPIYGLILNGLKGLYTRVGRHYFSNPEARRLAQGFYQQLLNILHTKQYELIVDSVRDYGRRSGEIWHGMQVSMPTELLPAR.

One can recognise an HTH gntR-type domain in the interval 6 to 74 (QSPAGFAEEY…HGKPTKVNNF (69 aa)). Residues 34 to 53 (ERELSELIGVTRTTLREVLQ) constitute a DNA-binding region (H-T-H motif).

In terms of assembly, homodimer.

Its subcellular location is the cytoplasm. Its function is as follows. Multifunctional regulator of fatty acid metabolism. The sequence is that of Fatty acid metabolism regulator protein from Erwinia tasmaniensis (strain DSM 17950 / CFBP 7177 / CIP 109463 / NCPPB 4357 / Et1/99).